Reading from the N-terminus, the 414-residue chain is 2,3-diketo-5-methylthiopentyl-1-phosphate enolase (414 aa).

Residue K99 is the Proton acceptor of the active site. Substrate contacts are provided by residues K148, K174–E177, H265, G338, and G360–G361. Residues K174, D176, and E177 each coordinate Mg(2+). K174 carries the N6-carboxylysine modification.

The protein belongs to the RuBisCO large chain family. Type IV subfamily. In terms of assembly, homodimer. Mg(2+) serves as cofactor.

The catalysed reaction is 5-methylsulfanyl-2,3-dioxopentyl phosphate = 2-hydroxy-5-methylsulfanyl-3-oxopent-1-enyl phosphate. Its pathway is amino-acid biosynthesis; L-methionine biosynthesis via salvage pathway; L-methionine from S-methyl-5-thio-alpha-D-ribose 1-phosphate: step 3/6. Its function is as follows. Catalyzes the enolization of 2,3-diketo-5-methylthiopentyl-1-phosphate (DK-MTP-1-P) into 2-hydroxy-3-keto-5-methylthiopentenyl-1-phosphate (HK-MTPenyl-1-P). This is 2,3-diketo-5-methylthiopentyl-1-phosphate enolase from Bacillus thuringiensis (strain Al Hakam).